Here is a 158-residue protein sequence, read N- to C-terminus: Small ribosomal subunit protein uS13 (158 aa).

It belongs to the universal ribosomal protein uS13 family. As to quaternary structure, part of the 30S ribosomal subunit. Forms a loose heterodimer with protein S19. Forms two bridges to the 50S subunit in the 70S ribosome.

In terms of biological role, located at the top of the head of the 30S subunit, it contacts several helices of the 16S rRNA. In the 70S ribosome it contacts the 23S rRNA (bridge B1a) and protein L5 of the 50S subunit (bridge B1b), connecting the 2 subunits; these bridges are implicated in subunit movement. This is Small ribosomal subunit protein uS13 from Picrophilus torridus (strain ATCC 700027 / DSM 9790 / JCM 10055 / NBRC 100828 / KAW 2/3).